The following is a 161-amino-acid chain: ATP synthase subunit b (161 aa).

The chain crosses the membrane as a helical span at residues 11–31; the sequence is AISFVLFVWFCMKYIWPPIIL.

The protein belongs to the ATPase B chain family. In terms of assembly, F-type ATPases have 2 components, F(1) - the catalytic core - and F(0) - the membrane proton channel. F(1) has five subunits: alpha(3), beta(3), gamma(1), delta(1), epsilon(1). F(0) has three main subunits: a(1), b(2) and c(10-14). The alpha and beta chains form an alternating ring which encloses part of the gamma chain. F(1) is attached to F(0) by a central stalk formed by the gamma and epsilon chains, while a peripheral stalk is formed by the delta and b chains.

It is found in the cell membrane. Functionally, f(1)F(0) ATP synthase produces ATP from ADP in the presence of a proton or sodium gradient. F-type ATPases consist of two structural domains, F(1) containing the extramembraneous catalytic core and F(0) containing the membrane proton channel, linked together by a central stalk and a peripheral stalk. During catalysis, ATP synthesis in the catalytic domain of F(1) is coupled via a rotary mechanism of the central stalk subunits to proton translocation. Component of the F(0) channel, it forms part of the peripheral stalk, linking F(1) to F(0). This Buchnera aphidicola subsp. Acyrthosiphon pisum (strain APS) (Acyrthosiphon pisum symbiotic bacterium) protein is ATP synthase subunit b.